We begin with the raw amino-acid sequence, 132 residues long: Small ribosomal subunit protein uS8 (132 aa).

Belongs to the universal ribosomal protein uS8 family. In terms of assembly, part of the 30S ribosomal subunit. Contacts proteins S5 and S12.

Functionally, one of the primary rRNA binding proteins, it binds directly to 16S rRNA central domain where it helps coordinate assembly of the platform of the 30S subunit. The sequence is that of Small ribosomal subunit protein uS8 from Gluconobacter oxydans (strain 621H) (Gluconobacter suboxydans).